A 378-amino-acid polypeptide reads, in one-letter code: GTP cyclohydrolase-2 (378 aa).

The interval 1-180 is DHBP synthase-like; that stretch reads MEEVSSHVKS…IKDMIEFRIK (180 aa). A GTP cyclohydrolase II region spans residues 181–378; sequence SEKIVERVIE…KMGHLICFND (198 aa). 229–233 serves as a coordination point for GTP; the sequence is RIHSE. Cys-234, Cys-245, and Cys-247 together coordinate Zn(2+). GTP is bound by residues Gln-250, 273-275, and Thr-295; that span reads EGR. The active-site Proton acceptor is the Asp-307. Arg-309 serves as the catalytic Nucleophile. 2 residues coordinate GTP: Thr-330 and Lys-335.

This sequence in the N-terminal section; belongs to the DHBP synthase family. In the C-terminal section; belongs to the GTP cyclohydrolase II family. Requires Zn(2+) as cofactor.

It carries out the reaction GTP + 4 H2O = 2,5-diamino-6-hydroxy-4-(5-phosphoribosylamino)-pyrimidine + formate + 2 phosphate + 3 H(+). It participates in cofactor biosynthesis; riboflavin biosynthesis; 5-amino-6-(D-ribitylamino)uracil from GTP: step 1/4. Functionally, catalyzes the conversion of GTP to 2,5-diamino-6-ribosylamino-4(3H)-pyrimidinone 5'-phosphate (DARP), formate and pyrophosphate. The sequence is that of GTP cyclohydrolase-2 (ribA) from Archaeoglobus fulgidus (strain ATCC 49558 / DSM 4304 / JCM 9628 / NBRC 100126 / VC-16).